The sequence spans 295 residues: Ankyrin repeat and SOCS box protein 17 (295 aa).

One copy of the ANK repeat lies at 146-176 (SGITPLFYVAQTRQSNIFKILLQYGILEREK). In terms of domain architecture, SOCS box spans 232–295 (LGRHPIISNW…RLQNYLNLEI (64 aa)).

Belongs to the ankyrin SOCS box (ASB) family. As to expression, specifically expressed in testis. Not detected in other tissues tested.

The protein operates within protein modification; protein ubiquitination. In terms of biological role, may be a substrate-recognition component of a SCF-like ECS (Elongin-Cullin-SOCS-box protein) E3 ubiquitin-protein ligase complex which mediates the ubiquitination and subsequent proteasomal degradation of target proteins. The sequence is that of Ankyrin repeat and SOCS box protein 17 (ASB17) from Homo sapiens (Human).